We begin with the raw amino-acid sequence, 529 residues long: ATP synthase subunit alpha (529 aa).

Residue 173–180 (GDRQTGKT) participates in ATP binding.

It belongs to the ATPase alpha/beta chains family. In terms of assembly, F-type ATPases have 2 components, CF(1) - the catalytic core - and CF(0) - the membrane proton channel. CF(1) has five subunits: alpha(3), beta(3), gamma(1), delta(1), epsilon(1). CF(0) has three main subunits: a(1), b(2) and c(9-12). The alpha and beta chains form an alternating ring which encloses part of the gamma chain. CF(1) is attached to CF(0) by a central stalk formed by the gamma and epsilon chains, while a peripheral stalk is formed by the delta and b chains.

It localises to the cell membrane. It catalyses the reaction ATP + H2O + 4 H(+)(in) = ADP + phosphate + 5 H(+)(out). Its function is as follows. Produces ATP from ADP in the presence of a proton gradient across the membrane. The alpha chain is a regulatory subunit. The polypeptide is ATP synthase subunit alpha (Streptomyces avermitilis (strain ATCC 31267 / DSM 46492 / JCM 5070 / NBRC 14893 / NCIMB 12804 / NRRL 8165 / MA-4680)).